A 213-amino-acid polypeptide reads, in one-letter code: Proteasome subunit beta (213 aa).

The propeptide at 1-11 is removed in mature form; by autocatalysis; that stretch reads MSMIEEKIYKG. Residue Thr12 is the Nucleophile of the active site.

Belongs to the peptidase T1B family. As to quaternary structure, the 20S proteasome core is composed of 14 alpha and 14 beta subunits that assemble into four stacked heptameric rings, resulting in a barrel-shaped structure. The two inner rings, each composed of seven catalytic beta subunits, are sandwiched by two outer rings, each composed of seven alpha subunits. The catalytic chamber with the active sites is on the inside of the barrel. Has probably a gated structure, the ends of the cylinder being occluded by the N-termini of the alpha-subunits. Is likely capped at one or both ends by the proteasome regulatory ATPase, PAN.

Its subcellular location is the cytoplasm. The catalysed reaction is Cleavage of peptide bonds with very broad specificity.. Its activity is regulated as follows. The formation of the proteasomal ATPase PAN-20S proteasome complex, via the docking of the C-termini of PAN into the intersubunit pockets in the alpha-rings, triggers opening of the gate for substrate entry. Interconversion between the open-gate and close-gate conformations leads to a dynamic regulation of the 20S proteasome proteolysis activity. Component of the proteasome core, a large protease complex with broad specificity involved in protein degradation. This chain is Proteasome subunit beta, found in Archaeoglobus fulgidus (strain ATCC 49558 / DSM 4304 / JCM 9628 / NBRC 100126 / VC-16).